Here is a 119-residue protein sequence, read N- to C-terminus: DNA-binding protein MmarC7_1157 (119 aa).

A compositionally biased stretch (basic and acidic residues) spans 1–12 (MNPEEIRQRRLQ). The tract at residues 1-37 (MNPEEIRQRRLQEMQAKAQEQGAANDPEAQRQAQEQQ) is disordered.

Belongs to the PDCD5 family.

This Methanococcus maripaludis (strain C7 / ATCC BAA-1331) protein is DNA-binding protein MmarC7_1157.